The primary structure comprises 672 residues: Forkhead box protein O3 (672 aa).

Disordered regions lie at residues 1–85 (MAEA…GVSS) and 110–152 (GPAS…CSSR). Ser30 is subject to Phosphoserine. A Phosphothreonine modification is found at Thr32. Lys46 carries the post-translational modification N6-methyllysine. Residues 57-68 (IPEEDDDEDDED) are compositionally biased toward acidic residues. The segment at 80–108 (GGGVSSTLGSGLLLEDSAMLLAPGGQDLG) is required for mitochondrial import. Over residues 110-129 (GPASAAGALSGGTPTQLQPQ) the composition is skewed to low complexity. An N6-methyllysine modification is found at Lys148. The fork-head DNA-binding region spans 156–250 (WGNLSYADLI…KSGKAPRRRA (95 aa)). Thr178 carries the phosphothreonine modification. Ser208 and Ser214 each carry phosphoserine. Lys229 is modified (N6-methyllysine). Residues 230–301 (SSWWIINPDG…GSPTSRSSDE (72 aa)) are disordered. Residue Lys241 is modified to N6-acetyllysine. Positions 241–258 (KSGKAPRRRAVSMDNSNK) match the Nuclear localization signal motif. Ser252 carries the post-translational modification Phosphoserine. A compositionally biased stretch (basic residues) spans 260 to 271 (TKSRGRAAKKKA). An N6-methyllysine mark is found at Lys261 and Lys270. Residues Ser279 and Ser283 each carry the phosphoserine modification. Residues 282–297 (DSPSQLSKWPGSPTSR) are compositionally biased toward polar residues. Lys289 bears the N6-methyllysine mark. Phosphoserine is present on Ser293. Phosphoserine; by CaMK2A is present on Ser298. The interval 299–672 (SDELDAWTDF…QASSQSWVPG (374 aa)) is mediates interaction with CHUK/IKKA and IKBKB/IKKB. Position 310 is a phosphoserine (Ser310). At Ser314 the chain carries Phosphoserine; by SGK1. Phosphoserine; by AMPK is present on residues Ser398 and Ser412. Disordered stretches follow at residues 399–441 (QPSP…SLNS) and 535–583 (HQHQ…QTLS). Polar residues-rich tracts occupy residues 409–441 (RGSSFPYTAKSSGLGSPTGSFNSTVFGPSSLNS) and 548–577 (ALSNSVSNMGLSDSSSLGSAKHQQQSPASQ). Lys418 bears the N6-methyllysine mark. A Phosphoserine modification is found at Ser420. Phosphoserine; by MAPKAPK5 is present on Ser550. Ser554 carries the post-translational modification Phosphoserine; by AMPK and MAPKAPK5. Phosphoserine; by AMPK is present on residues Ser587 and Ser625. Ser643 carries the phosphoserine; by IKKB modification.

Upon metabolic stress, forms a complex composed of FOXO3, SIRT3 and mitochondrial RNA polymerase POLRMT; the complex is recruited to mtDNA in a SIRT3-dependent manner. Also forms a complex composed of FOXO3, SIRT3, TFAM and POLRMT. Interacts with SIRT2; the interaction occurs independently of SIRT2 deacetylase activity. Interacts with YWHAB/14-3-3-beta and YWHAZ/14-3-3-zeta, which are required for cytosolic sequestration. Upon oxidative stress, interacts with STK4/MST1, which disrupts interaction with YWHAB/14-3-3-beta and leads to nuclear translocation. Interacts with PIM1. Interacts with DDIT3/CHOP. Interacts (deacetylated form) with SKP2. Interacts with CHUK and IKBKB. Interacts with CAMK2A, CAMK2B and calcineurin A. Interacts with NUPR1; this interaction represses FOXO3 transactivation. Post-translationally, deacetylation by SIRT1 or SIRT2 stimulates interaction of FOXO3 with SKP2 and facilitates SCF(SKP2)-mediated FOXO3 ubiquitination and proteasomal degradation. Deacetylation by SIRT2 stimulates FOXO3-mediated transcriptional activity in response to oxidative stress. Deacetylated by SIRT3. Deacetylation by SIRT3 stimulates FOXO3-mediated mtDNA transcriptional activity in response to metabolic stress. In terms of processing, in the presence of survival factors such as IGF1, phosphorylated on Thr-32 and Ser-252 by AKT1/PKB. This phosphorylated form then interacts with 14-3-3 proteins and is retained in the cytoplasm. Survival factor withdrawal induces dephosphorylation and promotes translocation to the nucleus where the dephosphorylated protein induces transcription of target genes and triggers apoptosis. Although AKT1/PKB doesn't appear to phosphorylate Ser-314 directly, it may activate other kinases that trigger phosphorylation at this residue. Phosphorylated by STK4/MST1 on Ser-208 upon oxidative stress, which leads to dissociation from YWHAB/14-3-3-beta and nuclear translocation. Phosphorylated by PIM1. Phosphorylation by AMPK leads to the activation of transcriptional activity without affecting subcellular localization. Phosphorylated by AMPK on Ser-30 in response to metabolic stress which mediates FOXO3 mitochondrial translocation. Phosphorylation by MAPKAPK5 promotes nuclear localization and DNA-binding, leading to induction of miR-34b and miR-34c expression, 2 post-transcriptional regulators of MYC that bind to the 3'UTR of MYC transcript and prevent its translation. Phosphorylated by CHUK/IKKA and IKBKB/IKKB. TNF-induced inactivation of FOXO3 requires its phosphorylation at Ser-643 by IKBKB/IKKB which promotes FOXO3 retention in the cytoplasm, polyubiquitination and ubiquitin-mediated proteasomal degradation. May be dephosphorylated by calcineurin A on Ser-298 which abolishes FOXO3 transcriptional activity. Phosphorylation at Ser-252 promotes its degradation by the proteasome. Dephosphorylation at Ser-252 by protein phosphatase 2A (PPP2CA) promotes its stabilization; interaction with PPP2CA is enhanced by AMBRA1. Heavily methylated by SET9 which decreases stability, while moderately increasing transcriptional activity. The main methylation site is Lys-270. Methylation doesn't affect subcellular location. Post-translationally, polyubiquitinated. Ubiquitinated by a SCF complex containing SKP2, leading to proteasomal degradation. In terms of processing, the N-terminus is cleaved following import into the mitochondrion. As to expression, expressed in white and brown adipose tissues (at protein level). Expressed in liver, kidney, lung and colon (at protein level). Expressed in skeletal muscles (at protein level).

The protein localises to the cytoplasm. The protein resides in the cytosol. It localises to the nucleus. Its subcellular location is the mitochondrion matrix. It is found in the mitochondrion outer membrane. In terms of biological role, transcriptional activator that recognizes and binds to the DNA sequence 5'-[AG]TAAA[TC]A-3' and regulates different processes, such as apoptosis and autophagy. Acts as a positive regulator of autophagy in skeletal muscle: in starved cells, enters the nucleus following dephosphorylation and binds the promoters of autophagy genes, such as GABARAP1L, MAP1LC3B and ATG12, thereby activating their expression, resulting in proteolysis of skeletal muscle proteins. Triggers apoptosis in the absence of survival factors, including neuronal cell death upon oxidative stress. Participates in post-transcriptional regulation of MYC: following phosphorylation by MAPKAPK5, promotes induction of miR-34b and miR-34c expression, 2 post-transcriptional regulators of MYC that bind to the 3'UTR of MYC transcript and prevent its translation. In response to metabolic stress, translocates into the mitochondria where it promotes mtDNA transcription. Also acts as a key regulator of chondrogenic commitment of skeletal progenitor cells in response to lipid availability: when lipids levels are low, translocates to the nucleus and promotes expression of SOX9, which induces chondrogenic commitment and suppresses fatty acid oxidation. Also acts as a key regulator of regulatory T-cells (Treg) differentiation by activating expression of FOXP3. This chain is Forkhead box protein O3, found in Mus musculus (Mouse).